Here is a 325-residue protein sequence, read N- to C-terminus: Undecaprenyl-phosphate 4-deoxy-4-formamido-L-arabinose transferase (325 aa).

2 helical membrane passes run 235–255 (LSVVGSVIAVSGFLLAVLLMV) and 269–291 (VFTLFALLFIFIGAQFVAMGLLG).

It belongs to the glycosyltransferase 2 family.

The protein resides in the cell inner membrane. The enzyme catalyses UDP-4-deoxy-4-formamido-beta-L-arabinose + di-trans,octa-cis-undecaprenyl phosphate = 4-deoxy-4-formamido-alpha-L-arabinopyranosyl di-trans,octa-cis-undecaprenyl phosphate + UDP. It participates in glycolipid biosynthesis; 4-amino-4-deoxy-alpha-L-arabinose undecaprenyl phosphate biosynthesis; 4-amino-4-deoxy-alpha-L-arabinose undecaprenyl phosphate from UDP-4-deoxy-4-formamido-beta-L-arabinose and undecaprenyl phosphate: step 1/2. Its pathway is bacterial outer membrane biogenesis; lipopolysaccharide biosynthesis. Functionally, catalyzes the transfer of 4-deoxy-4-formamido-L-arabinose from UDP to undecaprenyl phosphate. The modified arabinose is attached to lipid A and is required for resistance to polymyxin and cationic antimicrobial peptides. Essential for virulence in insects. The protein is Undecaprenyl-phosphate 4-deoxy-4-formamido-L-arabinose transferase of Photorhabdus laumondii subsp. laumondii (strain DSM 15139 / CIP 105565 / TT01) (Photorhabdus luminescens subsp. laumondii).